We begin with the raw amino-acid sequence, 199 residues long: Dephospho-CoA kinase (199 aa).

A DPCK domain is found at 3–199; that stretch reads VLGLTGSIGM…AAARMPRRRP (197 aa). Position 11 to 16 (11 to 16) interacts with ATP; it reads GMGKST.

It belongs to the CoaE family.

The protein resides in the cytoplasm. The enzyme catalyses 3'-dephospho-CoA + ATP = ADP + CoA + H(+). Its pathway is cofactor biosynthesis; coenzyme A biosynthesis; CoA from (R)-pantothenate: step 5/5. In terms of biological role, catalyzes the phosphorylation of the 3'-hydroxyl group of dephosphocoenzyme A to form coenzyme A. The polypeptide is Dephospho-CoA kinase (Rhodopseudomonas palustris (strain HaA2)).